A 359-amino-acid chain; its full sequence is Decorin (359 aa).

The first 16 residues, 1–16 (MKATIILLLLAQVSWA), serve as a signal peptide directing secretion. Residues 17-30 (GPFQQRGLFDFMLE) constitute a propeptide that is removed on maturation. Serine 34 carries an O-linked (Xyl...) (glycosaminoglycan) serine glycan. 2 disulfides stabilise this stretch: cysteine 54–cysteine 60 and cysteine 58–cysteine 67. LRR repeat units lie at residues 73–93 (DKVP…NNKI), 94–117 (TEIK…NNKI), 118–141 (SKVS…KNQL), 142–162 (KELP…ENEI), 163–186 (TKVR…TNPL), 187–212 (KSSG…DTNI), 213–233 (TSIP…GNKI), 234–257 (SRVD…FNSI), 258–281 (SAVD…NNKL), 282–304 (TRVP…NNNI), 305–334 (SVVG…SNPV), and 335–359 (QYWE…GNYK). N-linked (GlcNAc...) asparagine glycosylation occurs at asparagine 211. N-linked (GlcNAc...) asparagine glycosylation is found at asparagine 262 and asparagine 303. A disulfide bridge connects residues cysteine 313 and cysteine 346.

Belongs to the small leucine-rich proteoglycan (SLRP) family. SLRP class I subfamily. Binds to type I and type II collagen, fibronectin and TGF-beta. Forms a ternary complex with MFAP2 and ELN. Interacts with DPT. The attached glycosaminoglycan chain can be either chondroitin sulfate or dermatan sulfate depending upon the tissue of origin. Detected in placenta (at protein level). Detected in cerebrospinal fluid, fibroblasts and urine (at protein level).

The protein localises to the secreted. The protein resides in the extracellular space. It localises to the extracellular matrix. May affect the rate of fibrils formation. The protein is Decorin (DCN) of Homo sapiens (Human).